We begin with the raw amino-acid sequence, 465 residues long: FAD-dependent monooxygenase olcE (465 aa).

The helical transmembrane segment at 9–29 threads the bilayer; that stretch reads IIIGGSVAGLTLALSLNKIGI. Residues Glu-35, Gly-49, Arg-108, Asp-308, and Ala-321 each coordinate FAD.

Belongs to the paxM FAD-dependent monooxygenase family. Requires FAD as cofactor.

The protein resides in the membrane. It functions in the pathway secondary metabolite biosynthesis; terpenoid biosynthesis. Functionally, FAD-dependent monooxygenase; part of the gene cluster that mediates the biosynthesis of 15-deoxyoxalicine B. The first step of the pathway is the synthesis of nicotinyl-CoA from nicotinic acid by the nicotinic acid-CoA ligase olcI. Nicotinyl-CoA is then a substrate of polyketide synthase olcA to produce 4-hydroxy-6-(3-pyridinyl)-2H-pyran-2-one (HPPO) which is further prenylated by the polyprenyl transferase olcH to yield geranylgeranyl-HPPO. Geranylgeranyl pyrophosphate is provided by the cluster-specific geranylgeranyl pyrophosphate synthase olcC. The FAD-dependent monooxygenase olcE catalyzes the epoxidation of geranylgeranyl-HPPO and the terpene cyclase olcD catalyzes the cyclization of the terpenoid component, resulting in the formation of the tricyclic terpene moiety seen in predecaturin E. The cytochrome P450 monooxygenase then catalyzes the allylic oxidation of predecaturin E, which is followed by spirocylization with concomitant loss of one molecule of water to form decaturin E. Decaturin E is the substrate of the cytochrome P450 monooxygenase olcJ which hydroxylates it at the C-29 position to form decaturin F. The short-chain dehydrogenase/reductase olcF may catalyze the oxidation of decaturin F to generate the 29-hydroxyl-27-one intermediate, and subsequent hemiacetal formation probably leads to the formation of decaturin C. The dioxygenase olcK may be a peroxisomal enzyme that catalyzes the hydroxylation of decaturin C into decaturin A once decaturin C is shuttled into the peroxisome by the MFS transporter olcL. Finally the cytochrome P450 monooxygenase olcB catalyzes the oxidative rearrangement to yield 15-deoxyoxalicine B. In the absence of olcJ, decaturin E may be shunted to a pathway in which it is oxidized to a ketone, possibly by olcF, to form decaturin D, which undergoes further allylic oxidation to yield decaturin G. Moreover, in the absence of oclK or oclL, oclB can convert decaturin C into 15-deoxyoxalicine A. The polypeptide is FAD-dependent monooxygenase olcE (Penicillium canescens).